The sequence spans 1344 residues: DEAD-box ATP-dependent RNA helicase FANCM (1344 aa).

The segment at 39-61 (SSSHFTPLANPPITANLTKPPAK) is disordered. A Helicase ATP-binding domain is found at 124–292 (ITKTALFSNT…GIIDNLQIST (169 aa)). 137–144 (LPTGLGKT) contributes to the ATP binding site. Residues 240 to 243 (DEAH) carry the DEAH box motif. Residues 450–621 (KLSKMLEILV…SFNFHPSPRM (172 aa)) enclose the Helicase C-terminal domain. 4 disordered regions span residues 765–790 (VNTS…KDYE), 1110–1148 (EVSS…TQAE), 1183–1218 (YSAG…SNQD), and 1307–1344 (KQRS…LGLW). Over residues 1118–1135 (SADENEDVTGDSFEDSFI) the composition is skewed to acidic residues. The segment covering 1207 to 1218 (TPKTTNSESNQD) has biased composition (polar residues). The span at 1308–1318 (QRSEAKEKEDA) shows a compositional bias: basic and acidic residues.

The protein belongs to the DEAD box helicase family. DEAH subfamily. FANCM sub-subfamily.

It is found in the nucleus. It carries out the reaction ATP + H2O = ADP + phosphate + H(+). In terms of biological role, involved in ordered homologous recombination (HR) events in somatic and meiotic cells. Involved in the suppression of spontaneous HR events in somatic cells. Has an opposite function to the DNA binding cofactor MHF1 which promotes spontaneous HR. Functions in replicative repair independently of MHF1 and in a parallel pathway to the endonuclease MUS81. Acts in the same pathway as the two DNA-binding cofactors MHF1 and MHF2 to restrain class II meiotic crossover (CO), and acts exclusively with MHF1 and MHF2 during meiosis to repair DNA interstrand cross-links (ICLs). This common pathway is in parallel to the pathway that involves the RECQ4A helicase. Seems to be involved in the stabilization of recombination intermediates. Involved in DNA double-strand break (DSB) repair during meiosis. Required for synthesis-dependent strand annealing (SDSA) and to a lesser extent for single-strand annealing (SSA). May process meiotic DSB repair intermediates, possibly D-loops, driving them toward noncrossover (NCO) resolution. The polypeptide is DEAD-box ATP-dependent RNA helicase FANCM (Arabidopsis thaliana (Mouse-ear cress)).